The following is a 146-amino-acid chain: Large ribosomal subunit protein mL49 (146 aa).

The transit peptide at 1-38 (MISSCVTRCFGRGKCLPGPATASIYQTIRCISTNSNKA) directs the protein to the mitochondrion.

This sequence belongs to the mitochondrion-specific ribosomal protein mL49 family. Component of the mitochondrial large ribosomal subunit (mt-LSU). Mature yeast 74S mitochondrial ribosomes consist of a small (37S) and a large (54S) subunit. The 37S small subunit contains a 15S ribosomal RNA (15S mt-rRNA) and 34 different proteins. The 54S large subunit contains a 21S rRNA (21S mt-rRNA) and 46 different proteins.

It is found in the mitochondrion. Its function is as follows. Component of the mitochondrial ribosome (mitoribosome), a dedicated translation machinery responsible for the synthesis of mitochondrial genome-encoded proteins, including at least some of the essential transmembrane subunits of the mitochondrial respiratory chain. The mitoribosomes are attached to the mitochondrial inner membrane and translation products are cotranslationally integrated into the membrane. The chain is Large ribosomal subunit protein mL49 (IMG2) from Saccharomyces cerevisiae (strain ATCC 204508 / S288c) (Baker's yeast).